Here is a 391-residue protein sequence, read N- to C-terminus: Leucine aminopeptidase 1 (391 aa).

The N-terminal stretch at 1–19 is a signal peptide; that stretch reads MKLSIALALGATASTGVLA. The propeptide occupies 20–91; it reads AVVPQQEPLI…YPTLHAGSYV (72 aa). N-linked (GlcNAc...) asparagine glycosylation is present at N183. Zn(2+) contacts are provided by H191 and D210. N-linked (GlcNAc...) asparagine glycosylation occurs at N235. 2 residues coordinate Zn(2+): E249 and D276. An intrachain disulfide couples C325 to C329. Residue H358 coordinates Zn(2+).

This sequence belongs to the peptidase M28 family. M28E subfamily. In terms of assembly, monomer. It depends on Zn(2+) as a cofactor.

It is found in the secreted. Functionally, extracellular aminopeptidase that allows assimilation of proteinaceous substrates. This is Leucine aminopeptidase 1 (lap1) from Aspergillus niger (strain ATCC MYA-4892 / CBS 513.88 / FGSC A1513).